The chain runs to 325 residues: Replication factor C small subunit (325 aa).

45–52 (GPPGTGKT) serves as a coordination point for ATP.

It belongs to the activator 1 small subunits family. RfcS subfamily. As to quaternary structure, heteromultimer composed of small subunits (RfcS) and large subunits (RfcL).

In terms of biological role, part of the RFC clamp loader complex which loads the PCNA sliding clamp onto DNA. The chain is Replication factor C small subunit from Sulfolobus acidocaldarius (strain ATCC 33909 / DSM 639 / JCM 8929 / NBRC 15157 / NCIMB 11770).